The primary structure comprises 333 residues: Fructose-1,6-bisphosphatase class 1 (333 aa).

Residues E89, D110, L112, and D113 each contribute to the Mg(2+) site. Residues 113-116, N206, Y239, 257-259, and K269 each bind substrate; these read DGSS and YLY. E275 is a Mg(2+) binding site.

This sequence belongs to the FBPase class 1 family. As to quaternary structure, homotetramer. It depends on Mg(2+) as a cofactor.

It is found in the cytoplasm. It carries out the reaction beta-D-fructose 1,6-bisphosphate + H2O = beta-D-fructose 6-phosphate + phosphate. It functions in the pathway carbohydrate biosynthesis; gluconeogenesis. The protein is Fructose-1,6-bisphosphatase class 1 of Sodalis glossinidius (strain morsitans).